The following is a 244-amino-acid chain: UPF0280 protein Msp_1322 (244 aa).

This sequence belongs to the UPF0280 family.

The chain is UPF0280 protein Msp_1322 from Methanosphaera stadtmanae (strain ATCC 43021 / DSM 3091 / JCM 11832 / MCB-3).